A 219-amino-acid polypeptide reads, in one-letter code: MEILLNDVEVRVLGCLIEKELATPEYYPLTLNSLTTACNQKSNRDPVMALEESEVVRALDGLKMKHVAIQAADSGRVPRYRHILSERLRFSPAELAILAELLLRGPQTLGELRTRAERMHPFADLAAVEQVLGELAERTPPLVMRLPRQPGRKESRFAHLLAGEPDLSAEERTAPPEGARLQVMAENERIAALELEVATLRAEVGELRQVMEEFRSQFE.

This sequence belongs to the UPF0502 family.

The protein is UPF0502 protein GSU0233 of Geobacter sulfurreducens (strain ATCC 51573 / DSM 12127 / PCA).